The primary structure comprises 234 residues: MGAQWKVKHKEAAANAKGRTFGKLSKEIMIAARAGADPDMNSRLRLVVEQAKKASMPRETLERAIKKGAGLLGESVNFERLTYEGFAPHRVPVIVECLTDNINRTVSEIRVLFRKGQLGAAGSVSWDFLYQGMIEAVPTAPDADADEAAIEAGAQDCEPGEEGATLFLTEPTDMDAVCKALPQFGFAVQSAQLGYRPKSTVDGLSDEQMAEVEAFLEAIDNHDDVQNVYVGLAG.

This sequence belongs to the TACO1 family.

Its subcellular location is the cytoplasm. The chain is Probable transcriptional regulatory protein PSPTO_3162 from Pseudomonas syringae pv. tomato (strain ATCC BAA-871 / DC3000).